We begin with the raw amino-acid sequence, 226 residues long: Ribose-5-phosphate isomerase A (226 aa).

Residues threonine 25 to threonine 28, aspartate 81 to aspartate 84, and lysine 94 to glycine 97 each bind substrate. The Proton acceptor role is filled by glutamate 103. Lysine 121 contacts substrate.

This sequence belongs to the ribose 5-phosphate isomerase family. In terms of assembly, homodimer.

The catalysed reaction is aldehydo-D-ribose 5-phosphate = D-ribulose 5-phosphate. The protein operates within carbohydrate degradation; pentose phosphate pathway; D-ribose 5-phosphate from D-ribulose 5-phosphate (non-oxidative stage): step 1/1. Catalyzes the reversible conversion of ribose-5-phosphate to ribulose 5-phosphate. The polypeptide is Ribose-5-phosphate isomerase A (Enterococcus faecalis (strain ATCC 700802 / V583)).